The chain runs to 98 residues: NADH-ubiquinone oxidoreductase chain 4L (98 aa).

3 helical membrane-spanning segments follow: residues 1-21 (MTPIQFTFSSAFLLGLSGLAF), 26-46 (LLSALLCLEGMMLSLFIALSL), and 59-79 (APMLLLAFSACEASVGLALMV).

It belongs to the complex I subunit 4L family.

It localises to the mitochondrion membrane. The catalysed reaction is a ubiquinone + NADH + 5 H(+)(in) = a ubiquinol + NAD(+) + 4 H(+)(out). In terms of biological role, core subunit of the mitochondrial membrane respiratory chain NADH dehydrogenase (Complex I) which catalyzes electron transfer from NADH through the respiratory chain, using ubiquinone as an electron acceptor. Part of the enzyme membrane arm which is embedded in the lipid bilayer and involved in proton translocation. This chain is NADH-ubiquinone oxidoreductase chain 4L (MT-ND4L), found in Tetraodon nigroviridis (Spotted green pufferfish).